The primary structure comprises 256 residues: POU domain class 2-associating factor 1 (256 aa).

The disordered stretch occupies residues 1 to 23; the sequence is MLWQKPTAPEQAPAPARPYQGVR. The OCA domain occupies 16–38; that stretch reads ARPYQGVRVKEPVKELLRRKRGH.

The protein belongs to the POU2AF family. In terms of assembly, interacts with POU2F1/OCT1 and POU2F2/OCT2; the interaction increases POU2F1 and POU2F2 transactivation activity. Post-translationally, ubiquitinated; mediated by SIAH1 or SIAH2 and leading to its subsequent proteasomal degradation. As to expression, B-cell specific. Detected in mainly in spleen, but also in thymus, periphral blood leukocyte and small intestine.

Its subcellular location is the nucleus. Transcriptional coactivator that specifically associates with either POU2F1/OCT1 or POU2F2/OCT2. It boosts the POU2F1/OCT1 mediated promoter activity and to a lesser extent, that of POU2F2/OCT2. It recognizes the POU domains of POU2F1/OCT1 and POU2F2/OCT2. It is essential for the response of B-cells to antigens and required for the formation of germinal centers. Regulates IL6 expression in B cells as POU2F2/OCT2 coactivator. The sequence is that of POU domain class 2-associating factor 1 from Homo sapiens (Human).